The sequence spans 469 residues: 3-isopropylmalate dehydratase large subunit (469 aa).

Cys-350, Cys-410, and Cys-413 together coordinate [4Fe-4S] cluster.

It belongs to the aconitase/IPM isomerase family. LeuC type 1 subfamily. Heterodimer of LeuC and LeuD. [4Fe-4S] cluster is required as a cofactor.

It catalyses the reaction (2R,3S)-3-isopropylmalate = (2S)-2-isopropylmalate. The protein operates within amino-acid biosynthesis; L-leucine biosynthesis; L-leucine from 3-methyl-2-oxobutanoate: step 2/4. Functionally, catalyzes the isomerization between 2-isopropylmalate and 3-isopropylmalate, via the formation of 2-isopropylmaleate. This Brucella abortus (strain S19) protein is 3-isopropylmalate dehydratase large subunit.